We begin with the raw amino-acid sequence, 205 residues long: Imidazole glycerol phosphate synthase subunit HisH (205 aa).

Residues 6 to 205 (RVGIIDHGSG…LLTRWLNQLS (200 aa)) form the Glutamine amidotransferase type-1 domain. The Nucleophile role is filled by Cys-84. Residues His-185 and Glu-187 contribute to the active site.

As to quaternary structure, heterodimer of HisH and HisF.

Its subcellular location is the cytoplasm. It carries out the reaction 5-[(5-phospho-1-deoxy-D-ribulos-1-ylimino)methylamino]-1-(5-phospho-beta-D-ribosyl)imidazole-4-carboxamide + L-glutamine = D-erythro-1-(imidazol-4-yl)glycerol 3-phosphate + 5-amino-1-(5-phospho-beta-D-ribosyl)imidazole-4-carboxamide + L-glutamate + H(+). The enzyme catalyses L-glutamine + H2O = L-glutamate + NH4(+). Its pathway is amino-acid biosynthesis; L-histidine biosynthesis; L-histidine from 5-phospho-alpha-D-ribose 1-diphosphate: step 5/9. IGPS catalyzes the conversion of PRFAR and glutamine to IGP, AICAR and glutamate. The HisH subunit catalyzes the hydrolysis of glutamine to glutamate and ammonia as part of the synthesis of IGP and AICAR. The resulting ammonia molecule is channeled to the active site of HisF. The chain is Imidazole glycerol phosphate synthase subunit HisH from Cutibacterium acnes (strain DSM 16379 / KPA171202) (Propionibacterium acnes).